Reading from the N-terminus, the 183-residue chain is Streptavidin-V1 (183 aa).

The first 24 residues, 1-24, serve as a signal peptide directing secretion; that stretch reads MRKIVVAAIAVSLTTVSITASASA. Residues 37 to 159 enclose the Avidin-like domain; that stretch reads AEAGITGTWY…GHDTFTKVKP (123 aa). Biotin-binding residues include Tyr-67 and Tyr-78. Residues 83–85 carry the Cell attachment site; atypical motif; that stretch reads RYD. Positions 116, 132, and 144 each coordinate biotin.

This sequence belongs to the avidin/streptavidin family. In terms of assembly, homotetramer.

Its subcellular location is the secreted. The biological function of streptavidin is not known. Forms a strong non-covalent specific complex with biotin (one molecule of biotin per subunit of streptavidin). This is Streptavidin-V1 from Streptomyces violaceus (Streptomyces venezuelae).